Consider the following 186-residue polypeptide: Large ribosomal subunit protein uL6 (186 aa).

It belongs to the universal ribosomal protein uL6 family. In terms of assembly, part of the 50S ribosomal subunit.

Functionally, this protein binds to the 23S rRNA, and is important in its secondary structure. It is located near the subunit interface in the base of the L7/L12 stalk, and near the tRNA binding site of the peptidyltransferase center. This chain is Large ribosomal subunit protein uL6, found in Ignicoccus hospitalis (strain KIN4/I / DSM 18386 / JCM 14125).